Consider the following 148-residue polypeptide: Pseudoazurin (148 aa).

Positions 1 to 25 (MMIFRALIAAATLAIAIATTLPAAA) are cleaved as a signal peptide. Positions 30–118 (VKMLNSGPGG…MGMVALVVVG (89 aa)) constitute a Plastocyanin-like domain. His-65, Cys-103, His-106, and Met-111 together coordinate Cu cation.

Cu cation is required as a cofactor.

It is found in the periplasm. This is Pseudoazurin from Methylorubrum extorquens (strain ATCC 14718 / DSM 1338 / JCM 2805 / NCIMB 9133 / AM1) (Methylobacterium extorquens).